Consider the following 689-residue polypeptide: Elongation factor G 1 (689 aa).

The tr-type G domain occupies 7 to 282 (DQVRTIGIIS…AVVDFLPSPL (276 aa)). Residues 16–23 (SHIDAGKT), 80–84 (DTPGH), and 134–137 (NKMD) contribute to the GTP site.

This sequence belongs to the TRAFAC class translation factor GTPase superfamily. Classic translation factor GTPase family. EF-G/EF-2 subfamily.

Its subcellular location is the cytoplasm. Its function is as follows. Catalyzes the GTP-dependent ribosomal translocation step during translation elongation. During this step, the ribosome changes from the pre-translocational (PRE) to the post-translocational (POST) state as the newly formed A-site-bound peptidyl-tRNA and P-site-bound deacylated tRNA move to the P and E sites, respectively. Catalyzes the coordinated movement of the two tRNA molecules, the mRNA and conformational changes in the ribosome. The chain is Elongation factor G 1 from Geobacter sulfurreducens (strain ATCC 51573 / DSM 12127 / PCA).